A 187-amino-acid chain; its full sequence is Elongation factor P (187 aa).

This sequence belongs to the elongation factor P family.

The protein resides in the cytoplasm. It functions in the pathway protein biosynthesis; polypeptide chain elongation. In terms of biological role, involved in peptide bond synthesis. Stimulates efficient translation and peptide-bond synthesis on native or reconstituted 70S ribosomes in vitro. Probably functions indirectly by altering the affinity of the ribosome for aminoacyl-tRNA, thus increasing their reactivity as acceptors for peptidyl transferase. In Nocardia farcinica (strain IFM 10152), this protein is Elongation factor P.